Consider the following 151-residue polypeptide: Protein SprT-like (151 aa).

The SprT-like domain maps to 7 to 146 (QSLTESIAIK…CGRCGGILKL (140 aa)). H67 lines the Zn(2+) pocket. Residue E68 is part of the active site. H71 contributes to the Zn(2+) binding site.

It belongs to the SprT family. Zn(2+) serves as cofactor.

Its subcellular location is the cytoplasm. The protein is Protein SprT-like of Staphylococcus epidermidis (strain ATCC 35984 / DSM 28319 / BCRC 17069 / CCUG 31568 / BM 3577 / RP62A).